Consider the following 448-residue polypeptide: Packaging protein 1 (448 aa).

The interval 1–76 (METKGRRSAA…SQPAKRGGLL (76 aa)) is disordered. The segment covering 22–31 (PRKRPTRRAP) has biased composition (basic residues). Positions 56–67 (RPSSDSLLQEPS) are enriched in polar residues. 171 to 178 (GPTGCGKS) provides a ligand contact to ATP. Residues 440–448 (RAYRARKIK) form a DNA-binding region.

This sequence belongs to the adenoviridae packaging protein 1 family. As to quaternary structure, homodimer. Part of a genome packaging complex composed of packaging proteins 1, 2 and 3; this complex specifically binds to the packaging sequence on the left end of viral genomic DNA and performs packaging of the viral genome. Interacts with protein 33K.

It is found in the virion. It localises to the host nucleus. The protein resides in the host nucleoplasm. Its subcellular location is the host nucleolus. Component of the packaging machinery which encapsidates the viral DNA into preformed capsids and transcriptional activator of the viral major late promoter (MLP). Binds, along with packaging proteins 2 and 3, to the specific packaging sequence on the left end of viral genomic DNA and displays ATPase activity thereby providing the power stroke of the packaging machinery. The activity of packaging protein IVa2 is stimulated by protein 33K which acts as a terminase. May be the protein that pumps DNA into the capsid powered by ATP hydrolysis. Specifically binds to the 5'-CG-3' nucleotides of the repeats making up the packaging sequence. Component of the DEF-A and DEF-B transcription factors that bind downstream elements of the major late promoter (MLP), and stimulate transcription from the MLP after initiation of viral DNA replication. DEF-A is a heterodimer packaging proteins 1 and 2 and DEF-B is a homodimer of packaging protein 1. In Human adenovirus B serotype 7 (HAdV-7), this protein is Packaging protein 1.